The following is a 190-amino-acid chain: Peptidyl-prolyl cis-trans isomerase FKBP20-1 (190 aa).

N-acetylglycine is present on G2. The PPIase FKBP-type domain maps to 32-121; it reads LPVVDVHYEG…IFEVELVACR (90 aa). Residues 149–163 are compositionally biased toward basic and acidic residues; sequence AAAKEDDKKKREEAK. Residues 149-190 form a disordered region; it reads AAAKEDDKKKREEAKAAAAARIQAKLDAKKGPGKGKGKGKAK. Basic residues predominate over residues 179–190; that stretch reads GPGKGKGKGKAK.

This sequence belongs to the FKBP-type PPIase family.

It catalyses the reaction [protein]-peptidylproline (omega=180) = [protein]-peptidylproline (omega=0). Its function is as follows. PPIases accelerate the folding of proteins. It catalyzes the cis-trans isomerization of proline imidic peptide bonds in oligopeptides. In Arabidopsis thaliana (Mouse-ear cress), this protein is Peptidyl-prolyl cis-trans isomerase FKBP20-1 (FKBP20-1).